Here is a 2188-residue protein sequence, read N- to C-terminus: METIKSIADMATGFTNTIDSTVNAVTEGVSKIGNDSGGEILTKVADDASNLLGPNCVASTSQPENKDVVQATTTVNTLTNLTQHPSAPTMPFTPDFSNVDVFHSMAYDITTGDKNPSKLIRLDTTTWQHTWPRQHLINDVELPKAFWDKNSKPAYGQSRYFAAVRCGFHFQVQINVNQGTAGCALVVYEPKPIVTHGGHLEFGSYTNLPHVLMNLAETTQADLCIPYVSDTNYVKTDSSDLGRLRVYVWTPLTIPSSATNDVDVTVLGSLLQLDFQNPRTYDTDVNIYDNSPLDTKTKYGKLRFSKKILSMSTKYKWTRNKIDIAEGPGSMNMANVLSTTGAQSIALVGERAFYDPRTAGSKSRFGDMIHIAQLFSVMSDTTTPSTSSGIDDLGYLDWSATYVPQQVIHRNVVKLNQFSNLKPFVNAYTYFRGSLVLRMSVYASTFNRGRLRMGFFPNFTTNTTSEMDNAIYTICDIGSDNSFEITIPYTFSTWMRKTNGRPIGLFQVEVLNRLTYNSSCPNKVHCIVQGRLGNDARFYCPTGSLVEFQNSWGSQMDLTDPLCVEDDEAEDCKQTISPDELGLTSAQDDGPLGVEKPNYFLNFRAINVDIFTVSHTKVDNIFGRAWLALEHTFADDGTWRADLNFPTQGHGTLTRLFTYYSGELNVHVLYLSDNGFLRVTHAYDHDNDRSNFLSSNGVITVPAGEQMTLSVPFYSSKPLRTIRETGALGKLICKPLLSGTHSGKIEVYLSLRCPNLFFPSPAPKEKTSRALRGDLANFIDQSPYGQQQQTQMMKLAYLDRGFYKHYGIIVGGYVYQLDSDDIFKTALTGKARFTKTRLTPDWIVEEECELDYFRVKYLESSVNSEHIFSVDSNCETIAKDIFGTHTLSQHQAIGLVGAILLTAGLMSTIKTPVNATTIKEFFNHAIDGDEQGLSLLVQKCTTFFSSAATEILDNDLVKFIVKILVRILCYMVLYCHKPNILTTACLSTLLIMDVTSSSVLSPSCKALMQCLMDGDVKKLAEVVAESMSNTDDDEIKEQICDTVKYTKTILSNQGPFKGFNEVSTAFRHVDWWIHTLLKIKDMVLSVFKPSIESKAIQWLERNKEHVCSILDYASDIIVESKDQTKMKTQEFYQRYSDCLAKFKPIMAICFRSCHNSISNTVYRLFQELARIPNRISTQNDLIRVEPIGVWIQGEPGQGKSFLTHTLSRQLQKSCKLNGVYTNPTASEFMDGYDNQDIHLIDDLGQTRKEKDIEMLCNCISSVPFIVPMAHLEEKGKFYTSKLVIATTNKSDFSSTVLQDSGALKRRFPYIMHIRAAKAYSKSGKLNVSQAMSTMSTGECWEVSKNGRDWETLKLKDLVQKITEDYQERQKNYNAWKQQLENQTLDDLDDAVSYIKHNFPDAIPYIDEYLNIEMSTLIEQMEAFIEPRPSVFKCFAVKLPHKPGKQPRKLWAGSAGKIKSMLSFIERNKAWLTVVSAVTSAISILLLVTKIFKKEESKDERAYNPTLPITKPKGTFPVSQREFKNEAPYDGQLEHIISQMAYITGSTTGHLTHCAGYQHDEIILHGHSIKYLEQEEDLTLHYKNKVFPIENPSVTQVTLGGKPMDLAILKCKLPFRFKKNSKYYTNKIGTESMLIWMTEQGIITKEVQRVHHSGGIKTREGTESTKTISYTVKSCKGMCGGLLISKVEGNFKILGMHIAGNGEMGVAIPFNFLKNDMSDQGIITEVTPIQPMYINTKSQIHKSPVYGAVEVKMGPAVLSKSDTRLEEPVDCLIKKSASKYRVNKFQVNNELWQGVKACVKSKFREIFGVNGIVDMKTAILGTSHVNSMDLSTSAGYSLVKSGYKKKDLICLEPFSVSPMLEKLVQDKFHNLLKGNQITTIFNTCLKDELRKLDKIAAGKTRCIEACEVDYCIVYRMIMMEIYDKIYQTPCYYSGLAVGINPYKDWHFMINALNDYNYEMDYSQYDGSLSSMLLWEAVEVLAYCHDSPDLVMQLHKPVIDSDHVVFNERWLIHGGMPSGSPCTTVLNSLCNLMMCIYTTNLISPGVDCLPIVYGDDVILSLDREIEPERLQSIMADSFGAEVTGSRKDEPPSLKPRMEVEFLKRKPGYFPESTFIVGKLDTENMIQHLMWMKNFSTFKQQLQSYLMELCLHGKDIYQRYIKILDPYLKEWNIVVDDYDVVIAKLMPMVFD.

The Cell attachment site motif lies at 772–774 (RGD). An LRAT domain is found at 795 to 889 (LAYLDRGFYK…DIFGTHTLSQ (95 aa)). The active-site For protein 2A H-NC is the histidine 805. The active-site For protein 2A H-NC; Acyl-thioester intermediate is cysteine 874. In terms of domain architecture, SF3 helicase spans 1165 to 1326 (FQELARIPNR…KAYSKSGKLN (162 aa)). Residue 1193 to 1200 (GEPGQGKS) participates in ATP binding. Tyrosine 1502 is subject to O-(5'-phospho-RNA)-tyrosine. The Peptidase C3 domain maps to 1526–1716 (APYDGQLEHI…IPFNFLKNDM (191 aa)). Residues histidine 1566, aspartate 1604, and cysteine 1678 each act as for protease 3C activity in the active site. Cysteine 1905 serves as the catalytic Acyl-thioester intermediate. The region spanning 1953-2067 (DYNYEMDYSQ…SLDREIEPER (115 aa)) is the RdRp catalytic domain. Mg(2+)-binding residues include aspartate 1959 and aspartate 2053.

Belongs to the picornaviruses polyprotein family. As to quaternary structure, interacts with capsid protein VP1 and capsid protein VP3 to form heterotrimeric protomers. Five protomers subsequently associate to form pentamers which serve as building blocks for the capsid. Interacts with capsid protein VP0, and capsid protein VP3 to form heterotrimeric protomers. Five protomers subsequently associate to form pentamers which serve as building blocks for the capsid. In terms of assembly, interacts with capsid protein VP0 and capsid protein VP1 to form heterotrimeric protomers. Five protomers subsequently associate to form pentamers which serve as building blocks for the capsid. As to quaternary structure, homohexamer; forms a hexameric ring structure with 6-fold symmetry characteristic of AAA+ ATPases. Homodimer. Interacts with host ACBD3. In terms of assembly, interacts with RNA-directed RNA polymerase. As to quaternary structure, interacts with Viral protein genome-linked. It depends on Mg(2+) as a cofactor. In terms of processing, VPg is uridylylated by the polymerase and is covalently linked to the 5'-end of genomic RNA. This uridylylated form acts as a nucleotide-peptide primer for the polymerase. Specific enzymatic cleavages yield mature proteins. All cleavages are catalyzed by P3C.

The protein localises to the virion. It is found in the host cytoplasm. It localises to the host nucleus. Its subcellular location is the host nucleolus. The protein resides in the host cytoplasmic vesicle membrane. The catalysed reaction is RNA(n) + a ribonucleoside 5'-triphosphate = RNA(n+1) + diphosphate. It catalyses the reaction a ribonucleoside 5'-triphosphate + H2O = a ribonucleoside 5'-diphosphate + phosphate + H(+). It carries out the reaction Selective cleavage of Gln-|-Gly bond in the poliovirus polyprotein. In other picornavirus reactions Glu may be substituted for Gln, and Ser or Thr for Gly.. In terms of biological role, forms an icosahedral capsid of pseudo T=3 symmetry together with capsid proteins VP1 and VP3. The capsid is 300 Angstroms in diameter, composed of 60 copies of each capsid protein and enclosing the viral positive strand RNA genome. Capsid proteins interact with host alpha-V/beta-3 integrin heterodimer to provide virion attachment target cell. This attachment induces virion internalization predominantly through clathrin-mediated endocytosis. Binds packaging signals present in the viral RNA. Forms an icosahedral capsid of pseudo T=3 symmetry together with capsid proteins VP0 and VP1. The capsid is 300 Angstroms in diameter, composed of 60 copies of each capsid protein and enclosing the viral positive strand RNA genome. Capsid proteins interact with host alpha-V/beta-3 integrin heterodimer to provide virion attachment target cell. This attachment induces virion internalization predominantly through clathrin-mediated endocytosis. Binds packaging signals present in the viral RNA. Functionally, forms an icosahedral capsid of pseudo T=3 symmetry together with capsid proteins VP0 and VP3. The capsid is 300 Angstroms in diameter, composed of 60 copies of each capsid protein and enclosing the viral positive strand RNA genome. Capsid proteins interact with host alpha-V/beta-3 integrin heterodimer to provide virion attachment target cell. This attachment induces virion internalization predominantly through clathrin-mediated endocytosis. Binds packaging signals present in the viral RNA. Its function is as follows. Is not a protease. In terms of biological role, plays an essential role in the virus replication cycle by acting as a viroporin. Creates a pore in the host endoplasmic reticulum and as a consequence releases Ca2+ in the cytoplasm of infected cell. In turn, high levels of cytoplasmic calcium may trigger membrane trafficking and transport of viral ER-associated proteins to viroplasms, sites of viral genome replication. Induces and associates with structural rearrangements of intracellular membranes. Displays RNA-binding, nucleotide binding and NTPase activities. May play a role in virion morphogenesis and viral RNA encapsidation by interacting with the capsid protein VP3. Functionally, localizes the viral replication complex to the surface of membranous vesicles. It inhibits host cell endoplasmic reticulum-to-Golgi apparatus transport and causes the disassembly of the Golgi complex, possibly through GBF1 interaction. This would result in depletion of MHC, trail receptors and IFN receptors at the host cell surface. Plays an essential role in viral RNA replication by recruiting ACBD3 and PI4KB at the viral replication sites, thereby allowing the formation of the rearranged membranous structures where viral replication takes place. Its function is as follows. Acts as a primer for viral RNA replication and remains covalently bound to viral genomic RNA. VPg is uridylylated prior to priming replication into VPg-pUpU. The VPg-pUpU is then used as primer on the genomic RNA poly(A) by the RNA-dependent RNA polymerase to replicate the viral genome. Following genome release from the infecting virion in the cytoplasm, the VPg-RNA linkage is probably removed by host TDP2. During the late stage of the replication cycle, host TDP2 is excluded from sites of viral RNA synthesis and encapsidation, allowing for the generation of progeny virions. In terms of biological role, cysteine protease that generates mature viral proteins from the precursor polyprotein. In addition to its proteolytic activity, it binds to viral RNA, and thus influences viral genome replication. RNA and substrate bind cooperatively to the protease. Replicates the viral genomic RNA on the surface of intracellular membranes. Covalently attaches UMP to a tyrosine of VPg, which is used to prime RNA synthesis. The positive stranded RNA genome is first replicated at virus induced membranous vesicles, creating a dsRNA genomic replication form. This dsRNA is then used as template to synthesize positive stranded RNA genomes. ss(+)RNA genomes are either translated, replicated or encapsidated. This Human parechovirus 5 (strain CT86-6760) (HPeV-5) protein is Genome polyprotein.